Consider the following 141-residue polypeptide: Nucleoside diphosphate kinase (141 aa).

ATP is bound by residues Lys11, Phe59, Arg87, Thr93, Arg104, and Asn114. His117 serves as the catalytic Pros-phosphohistidine intermediate.

This sequence belongs to the NDK family. In terms of assembly, homotetramer. Requires Mg(2+) as cofactor.

The protein localises to the cytoplasm. The catalysed reaction is a 2'-deoxyribonucleoside 5'-diphosphate + ATP = a 2'-deoxyribonucleoside 5'-triphosphate + ADP. It carries out the reaction a ribonucleoside 5'-diphosphate + ATP = a ribonucleoside 5'-triphosphate + ADP. Functionally, major role in the synthesis of nucleoside triphosphates other than ATP. The ATP gamma phosphate is transferred to the NDP beta phosphate via a ping-pong mechanism, using a phosphorylated active-site intermediate. The protein is Nucleoside diphosphate kinase of Chromobacterium violaceum (strain ATCC 12472 / DSM 30191 / JCM 1249 / CCUG 213 / NBRC 12614 / NCIMB 9131 / NCTC 9757 / MK).